Consider the following 1856-residue polypeptide: Autophagy-related protein 2 (1856 aa).

Disordered stretches follow at residues 123–167 (NTND…TGNK), 229–283 (LRTL…GNES), 309–328 (KSAASGIPGEVDNKATDKED), 395–428 (TKSRSAQRNEKFPQYTNDNDEIPEDQSESDDASH), 1157–1177 (LNGTENGSTSESSSQEASSLM), 1614–1647 (MLGGEGSSVRSPNLGGSDNRRNSNASDELPVEVA), and 1719–1741 (KLQPHTKGNHEGLTEEEEDEDED). Positions 137 to 147 (ASEDDDEDDID) are enriched in acidic residues. Residues 250 to 262 (KKQQGSDNDSPTD) are compositionally biased toward polar residues. Acidic residues predominate over residues 270–280 (NDNDDDDDDYG). Residues 412-424 (DNDEIPEDQSESD) show a composition bias toward acidic residues. Residues 1157–1170 (LNGTENGSTSESSS) are compositionally biased toward low complexity. Polar residues predominate over residues 1621–1639 (SVRSPNLGGSDNRRNSNAS). The segment covering 1732-1741 (TEEEEDEDED) has biased composition (acidic residues).

The protein belongs to the ATG2 family.

It is found in the preautophagosomal structure membrane. The protein resides in the endoplasmic reticulum membrane. It carries out the reaction a 1,2-diacyl-sn-glycero-3-phosphocholine(in) = a 1,2-diacyl-sn-glycero-3-phosphocholine(out). The enzyme catalyses a 1,2-diacyl-sn-glycero-3-phospho-L-serine(in) = a 1,2-diacyl-sn-glycero-3-phospho-L-serine(out). It catalyses the reaction a 1,2-diacyl-sn-glycero-3-phosphoethanolamine(in) = a 1,2-diacyl-sn-glycero-3-phosphoethanolamine(out). Lipid transfer protein required for autophagosome completion and peroxisome degradation. Tethers the edge of the isolation membrane (IM) to the endoplasmic reticulum (ER) and mediates direct lipid transfer from ER to IM for IM expansion. ATG2/SPO72 binds to the ER exit site (ERES), which is the membrane source for autophagosome formation, using basic residues in its N-terminal region (NR) and to the expanding edge of the IM through its C-terminal region. The latter binding is assisted by an ATG18-PtdIns3P interaction. ATG2/SPO72 then extracts phospholipids from the membrane source using its NR and transfers them to ATG9 to the IM through its predicted beta-sheet-rich structure for membrane expansion. In Candida albicans (strain SC5314 / ATCC MYA-2876) (Yeast), this protein is Autophagy-related protein 2 (SPO72).